The primary structure comprises 223 residues: Glutathione S-transferase Z2 (223 aa).

In terms of domain architecture, GST N-terminal spans 10–91 (AKLKLYSYWR…YLDDKYPEPP (82 aa)). Residues 20–21 (SS), 20–25 (SSCAHR), Q49, 49–50 (QS), 62–63 (TV), V63, 75–76 (DS), Q115, and 119–121 (NMA) contribute to the glutathione site. The GST C-terminal domain maps to 96 to 221 (DYHKRAVNYQ…VPEKQPDTPS (126 aa)).

This sequence belongs to the GST superfamily. Zeta family.

The protein resides in the cytoplasm. It localises to the cytosol. The enzyme catalyses RX + glutathione = an S-substituted glutathione + a halide anion + H(+). In terms of biological role, may be involved in the conjugation of reduced glutathione to a wide number of exogenous and endogenous hydrophobic electrophiles and have a detoxification role against certain herbicides. The polypeptide is Glutathione S-transferase Z2 (GSTZ2) (Arabidopsis thaliana (Mouse-ear cress)).